Consider the following 256-residue polypeptide: Probable ABC transporter ATP-binding protein spyM18_0273 (256 aa).

Positions 4–246 constitute an ABC transporter domain; sequence LEINNLHVSI…EKEGYAGIAQ (243 aa). Residue 36–43 coordinates ATP; sequence GPNGTGKS.

Belongs to the ABC transporter superfamily. Ycf16 family.

It localises to the cell membrane. The polypeptide is Probable ABC transporter ATP-binding protein spyM18_0273 (Streptococcus pyogenes serotype M18 (strain MGAS8232)).